A 182-amino-acid polypeptide reads, in one-letter code: Transcriptional repressor NrdR (182 aa).

The disordered stretch occupies residues 1–24 (MRCPYCGGLDTQVRDSRPTEDNTA). Residues 3 to 34 (CPYCGGLDTQVRDSRPTEDNTAIRRRRICPDC) fold into a zinc finger. Basic and acidic residues predominate over residues 12-24 (QVRDSRPTEDNTA). Residues 49–139 (LMVLKRSGRR…VYRNFREAKD (91 aa)) form the ATP-cone domain. The tract at residues 146–182 (ELSQPELAQSDDVKAEGGAEGGRDKPKAAGKPPRSAE) is disordered. Positions 156 to 172 (DDVKAEGGAEGGRDKPK) are enriched in basic and acidic residues.

It belongs to the NrdR family. The cofactor is Zn(2+).

Functionally, negatively regulates transcription of bacterial ribonucleotide reductase nrd genes and operons by binding to NrdR-boxes. This chain is Transcriptional repressor NrdR, found in Xanthobacter autotrophicus (strain ATCC BAA-1158 / Py2).